A 444-amino-acid chain; its full sequence is Guanosine nucleotide diphosphate dissociation inhibitor 2 (444 aa).

The protein belongs to the Rab GDI family. In terms of tissue distribution, expressed in roots and floral buds.

Its function is as follows. Regulates the GDP/GTP exchange reaction of most RAB proteins by inhibiting the dissociation of GDP from them, and the subsequent binding of GTP. The chain is Guanosine nucleotide diphosphate dissociation inhibitor 2 (GDI2) from Arabidopsis thaliana (Mouse-ear cress).